Reading from the N-terminus, the 180-residue chain is tRNA (cytidine(56)-2'-O)-methyltransferase (180 aa).

Residue L85 participates in S-adenosyl-L-methionine binding.

This sequence belongs to the aTrm56 family. In terms of assembly, homodimer.

The protein resides in the cytoplasm. The catalysed reaction is cytidine(56) in tRNA + S-adenosyl-L-methionine = 2'-O-methylcytidine(56) in tRNA + S-adenosyl-L-homocysteine + H(+). In terms of biological role, specifically catalyzes the AdoMet-dependent 2'-O-ribose methylation of cytidine at position 56 in tRNAs. This chain is tRNA (cytidine(56)-2'-O)-methyltransferase, found in Methanobrevibacter smithii (strain ATCC 35061 / DSM 861 / OCM 144 / PS).